The primary structure comprises 305 residues: Glycine--tRNA ligase alpha subunit (305 aa).

It belongs to the class-II aminoacyl-tRNA synthetase family. As to quaternary structure, tetramer of two alpha and two beta subunits.

Its subcellular location is the cytoplasm. The enzyme catalyses tRNA(Gly) + glycine + ATP = glycyl-tRNA(Gly) + AMP + diphosphate. The protein is Glycine--tRNA ligase alpha subunit of Streptococcus pneumoniae (strain CGSP14).